The sequence spans 243 residues: L-fucose operon activator (243 aa).

The HTH deoR-type domain occupies 1-57 (MKAARQQAIVDLLLNHTSLTTEALSEQLKVSKETIRRDLNELQTQGKILRNHGRAKY). The H-T-H motif DNA-binding region spans 19–38 (LTTEALSEQLKVSKETIRRD).

Its function is as follows. Transcriptional activator of the fuc operon. This chain is L-fucose operon activator (fucR), found in Escherichia coli (strain K12).